The sequence spans 258 residues: uncharacterized protein (258 aa).

This is an uncharacterized protein from Caenorhabditis elegans.